We begin with the raw amino-acid sequence, 1184 residues long: C5a peptidase (1184 aa).

Positions 1–31 are cleaved as a signal peptide; sequence MRKKQKLPFDKLAIALMSTSILLNAQSDIKA. Composition is skewed to polar residues over residues 33–52 and 89–100; these read TVTE…QPTA and AKTTDTPATSKA. The disordered stretch occupies residues 33–117; the sequence is TVTEDTPATE…PSQVKTLQEK (85 aa). A Peptidase S8 domain is found at 99–581; the sequence is KATIRDLNDP…AGAVDAKKAS (483 aa). Active-site charge relay system residues include Asp130, His193, and Ser512. 4 stretches are compositionally biased toward basic and acidic residues: residues 1029–1054, 1061–1071, 1078–1088, and 1095–1107; these read EGHS…KPEQ, PDKKPETKPEQ, PDKKPEAKPEQ, and PDKK…EKDS. Positions 1029-1150 are disordered; sequence EGHSNKPEQD…RDQLPTTNDK (122 aa). 4 consecutive repeat copies span residues 1034–1067, 1068–1084, 1085–1101, and 1102–1118. Residues 1034–1118 are 4 X 17 AA tandem repeats; that stretch reads KPEQDGSDQV…GQTPGKTPQK (85 aa). Positions 1109 to 1123 are enriched in polar residues; the sequence is GQTPGKTPQKGQPSR. Positions 1144 to 1148 match the LPXTG sorting signal motif; sequence LPTTN. Thr1147 is modified (pentaglycyl murein peptidoglycan amidated threonine). Positions 1148–1184 are cleaved as a propeptide — removed by sortase; that stretch reads NDKDTNRLHLLKLVMTTFFFGLVAHIFKTKRQKETKK.

This sequence belongs to the peptidase S8 family. In terms of processing, cleaved by SpeB protease; leading to its degradation. Degradation by SpeB is probably strictly regulated to preserve integrity of C5a peptidase.

The protein localises to the secreted. It localises to the cell wall. The catalysed reaction is The primary cleavage site is at 67-His-|-Lys-68 in human C5a with a minor secondary cleavage site at 58-Ala-|-Ser-59.. Functionally, this virulence factor of S.pyogenes specifically cleaves the human serum chemotaxin C5a at '68-Lys-|-Asp-69' bond near its C-terminus, destroying its ability to serve as a chemoattractant. The chain is C5a peptidase (scpA) from Streptococcus pyogenes serotype M6 (strain ATCC BAA-946 / MGAS10394).